The chain runs to 257 residues: Kallikrein-1 (257 aa).

The first 18 residues, 1–18 (MWFLVLCLALSLGGTGRA), serve as a signal peptide directing secretion. The propeptide at 19-24 (PPIQSR) is activation peptide. Residues 25-254 (IVGGWECSQP…YVKWIEDTIA (230 aa)) form the Peptidase S1 domain. Disulfide bonds link cysteine 31–cysteine 169, cysteine 47–cysteine 63, cysteine 148–cysteine 215, cysteine 180–cysteine 194, and cysteine 205–cysteine 230. Residue histidine 62 is the Charge relay system of the active site. An O-linked (GalNAc...) serine glycan is attached at serine 90. Asparagine 99 carries an N-linked (GlcNAc...) asparagine glycan. A glycan (O-linked (GalNAc...) serine) is linked at serine 101. Residue asparagine 105 is glycosylated (N-linked (GlcNAc...) asparagine). The active-site Charge relay system is aspartate 116. Asparagine 160 is a glycosylation site (N-linked (GlcNAc...) asparagine). Serine 162 carries an O-linked (GalNAc...) serine glycan. Serine 209 acts as the Charge relay system in catalysis.

It belongs to the peptidase S1 family. Kallikrein subfamily.

It catalyses the reaction Preferential cleavage of Arg-|-Xaa bonds in small molecule substrates. Highly selective action to release kallidin (lysyl-bradykinin) from kininogen involves hydrolysis of Met-|-Xaa or Leu-|-Xaa.. In terms of biological role, glandular kallikreins cleave Met-Lys and Arg-Ser bonds in kininogen to release Lys-bradykinin. The protein is Kallikrein-1 (KLK1) of Macaca fascicularis (Crab-eating macaque).